The primary structure comprises 99 residues: Putative septation protein SpoVG (99 aa).

Belongs to the SpoVG family.

Functionally, could be involved in septation. The polypeptide is Putative septation protein SpoVG (Myxococcus xanthus (strain DK1622)).